The chain runs to 163 residues: Nucleotide-binding protein cbdbA1256 (163 aa).

It belongs to the YajQ family.

Its function is as follows. Nucleotide-binding protein. This is Nucleotide-binding protein cbdbA1256 from Dehalococcoides mccartyi (strain CBDB1).